A 412-amino-acid polypeptide reads, in one-letter code: L-cysteine:1D-myo-inositol 2-amino-2-deoxy-alpha-D-glucopyranoside ligase (412 aa).

Cys43 serves as a coordination point for Zn(2+). L-cysteinyl-5'-AMP contacts are provided by residues 43–46, Thr58, and 81–83; these read CGIT and NVT. A 'HIGH' region motif is present at residues 45 to 55; it reads ITPYDATHLGH. The short motif at 187–192 is the 'ERGGDP' region element; sequence ERGGDP. L-cysteinyl-5'-AMP is bound at residue Trp227. Cys231 contributes to the Zn(2+) binding site. Residue 249–251 coordinates L-cysteinyl-5'-AMP; it reads GSD. His256 serves as a coordination point for Zn(2+). Ile283 serves as a coordination point for L-cysteinyl-5'-AMP. The short motif at 289–293 is the 'KMSKS' region element; it reads KMSKS.

The protein belongs to the class-I aminoacyl-tRNA synthetase family. MshC subfamily. As to quaternary structure, monomer. Zn(2+) serves as cofactor.

The enzyme catalyses 1D-myo-inositol 2-amino-2-deoxy-alpha-D-glucopyranoside + L-cysteine + ATP = 1D-myo-inositol 2-(L-cysteinylamino)-2-deoxy-alpha-D-glucopyranoside + AMP + diphosphate + H(+). Functionally, catalyzes the ATP-dependent condensation of GlcN-Ins and L-cysteine to form L-Cys-GlcN-Ins. This Saccharopolyspora erythraea (strain ATCC 11635 / DSM 40517 / JCM 4748 / NBRC 13426 / NCIMB 8594 / NRRL 2338) protein is L-cysteine:1D-myo-inositol 2-amino-2-deoxy-alpha-D-glucopyranoside ligase.